The sequence spans 1003 residues: Helicase MOV-10 (1003 aa).

Lysine 148 carries the post-translational modification N6-acetyllysine. Threonine 160 and threonine 254 each carry phosphothreonine. Position 432 is a phosphoserine (serine 432). 524–531 lines the ATP pocket; it reads GPPGTGKT. Residues 645–648 carry the DEAG box motif; the sequence is DEAG. Positions 921-965 are interaction with AGO2 and APOBEC3G; that stretch reads NPLLLGHDPDWKVFLEFCKENGGYTGCPFPAKLDLQQGQNLLQGL. A disordered region spans residues 966-1003; it reads SKLSPSTSGPHSHDYLPQEREGEGGLSLQVEPEWRNEL. Phosphoserine is present on residues serine 969 and serine 977. Basic and acidic residues predominate over residues 976–988; that stretch reads HSHDYLPQEREGE.

The protein belongs to the DNA2/NAM7 helicase family. SDE3 subfamily. Interacts with DICER1, AGO2, TARBP2, EIF6 and RPL7A (60S ribosome subunit); they form a large RNA-induced silencing complex (RISC). Interacts with APOBEC3G in an RNA-dependent manner. Interacts with TRIM71 (via NHL repeats) in an RNA-dependent manner. Interacts with both protein products of LIRE1, ORF1p and ORF2p. Interacts with TUT4 and, to a lesser extent, TUT7; the interactions are RNA-dependent. Interacts with AGO2, TNRC6B and UPF1; the interactions are direct and RNA-dependent. Interacts with FMR1; this interaction is direct, occurs in an RNA-dependent manner on polysomes and induces association of MOV10 with RNAs. Interacts with SHFL; the interaction increases in presence of RNA. Interacts with DHX34; the interaction is RNA-independent. Interacts with IKBKE. Interacts with RBM46. As to quaternary structure, (Microbial infection) Interacts with the human hepatitis delta virus (HDV) antigen HDAg. In terms of assembly, (Microbial infection) Interacts with HIV-1 protein GAG. Post-translationally, ubiquitinated by the DCX(DCAF12) complex that specifically recognizes the glutamate-leucine (Glu-Leu) degron at the C-terminus, leading to its degradation. (Microbial infection) Cleaved and targeted for degradation by picornavirus proteases.

The protein resides in the cytoplasm. Its subcellular location is the P-body. It localises to the cytoplasmic ribonucleoprotein granule. It is found in the stress granule. The protein localises to the nucleus. It carries out the reaction ATP + H2O = ADP + phosphate + H(+). 5' to 3' RNA helicase that is involved in a number of cellular roles ranging from mRNA metabolism and translation, modulation of viral infectivity, inhibition of retrotransposition, or regulation of synaptic transmission. Plays an important role in innate antiviral immunity by promoting type I interferon production. Mechanistically, specifically uses IKKepsilon/IKBKE as the mediator kinase for IRF3 activation. Blocks HIV-1 virus replication at a post-entry step. Counteracts HIV-1 Vif-mediated degradation of APOBEC3G through its helicase activity by interfering with the ubiquitin-proteasome pathway. Also inhibits hepatitis B virus/HBV replication by interacting with HBV RNA and thereby inhibiting the early step of viral reverse transcription. Contributes to UPF1 mRNA target degradation by translocation along 3' UTRs. Required for microRNA (miRNA)-mediated gene silencing by the RNA-induced silencing complex (RISC). Required for both miRNA-mediated translational repression and miRNA-mediated cleavage of complementary mRNAs by RISC. In cooperation with FMR1, regulates miRNA-mediated translational repression by AGO2. Restricts retrotransposition of long interspersed element-1 (LINE-1) in cooperation with TUT4 and TUT7 counteracting the RNA chaperonne activity of L1RE1. Facilitates LINE-1 uridylation by TUT4 and TUT7. Required for embryonic viability and for normal central nervous system development and function. Plays two critical roles in early brain development: suppresses retroelements in the nucleus by directly inhibiting cDNA synthesis, while regulates cytoskeletal mRNAs to influence neurite outgrowth in the cytosol. May function as a messenger ribonucleoprotein (mRNP) clearance factor. Functionally, (Microbial infection) Required for RNA-directed transcription and replication of the human hepatitis delta virus (HDV). Interacts with small capped HDV RNAs derived from genomic hairpin structures that mark the initiation sites of RNA-dependent HDV RNA transcription. This Homo sapiens (Human) protein is Helicase MOV-10.